Reading from the N-terminus, the 760-residue chain is uncharacterized protein (760 aa).

The first 20 residues, 1–20 (MKFKLFLGSSFFGVATLLIA), serve as a signal peptide directing secretion. A lipid anchor (N-palmitoyl cysteine) is attached at Cys21. Residue Cys21 is the site of S-diacylglycerol cysteine attachment. 3 disordered regions span residues 221-243 (ENAANGTTEKAEKTVSASSLQLK), 272-315 (AKTN…TSDD), and 705-741 (IKATSKEGEQNQGKKGDGAQNQGKKGDGAQNGKNDKA). The span at 272–284 (AKTNGEKGNEKQE) shows a compositional bias: basic and acidic residues. The segment covering 300 to 312 (KNTSQDKTQNTQT) has biased composition (polar residues). The segment covering 705–721 (IKATSKEGEQNQGKKGD) has biased composition (basic and acidic residues).

Belongs to the MG185/MG260 family.

It is found in the cell membrane. This is an uncharacterized protein from Mycoplasma pneumoniae (strain ATCC 29342 / M129 / Subtype 1) (Mycoplasmoides pneumoniae).